A 458-amino-acid polypeptide reads, in one-letter code: Methylenetetrahydrofolate--tRNA-(uracil-5-)-methyltransferase TrmFO (458 aa).

11-16 (GGGMAG) contacts FAD.

The protein belongs to the MnmG family. TrmFO subfamily. Requires FAD as cofactor.

The protein resides in the cytoplasm. It catalyses the reaction uridine(54) in tRNA + (6R)-5,10-methylene-5,6,7,8-tetrahydrofolate + NADH + H(+) = 5-methyluridine(54) in tRNA + (6S)-5,6,7,8-tetrahydrofolate + NAD(+). The enzyme catalyses uridine(54) in tRNA + (6R)-5,10-methylene-5,6,7,8-tetrahydrofolate + NADPH + H(+) = 5-methyluridine(54) in tRNA + (6S)-5,6,7,8-tetrahydrofolate + NADP(+). Its function is as follows. Catalyzes the folate-dependent formation of 5-methyl-uridine at position 54 (M-5-U54) in all tRNAs. This Jannaschia sp. (strain CCS1) protein is Methylenetetrahydrofolate--tRNA-(uracil-5-)-methyltransferase TrmFO.